A 298-amino-acid polypeptide reads, in one-letter code: UDP-3-O-acyl-N-acetylglucosamine deacetylase (298 aa).

Zn(2+)-binding residues include His80, His239, and Asp243. Residue His266 is the Proton donor of the active site.

Belongs to the LpxC family. It depends on Zn(2+) as a cofactor.

It carries out the reaction a UDP-3-O-[(3R)-3-hydroxyacyl]-N-acetyl-alpha-D-glucosamine + H2O = a UDP-3-O-[(3R)-3-hydroxyacyl]-alpha-D-glucosamine + acetate. Its pathway is glycolipid biosynthesis; lipid IV(A) biosynthesis; lipid IV(A) from (3R)-3-hydroxytetradecanoyl-[acyl-carrier-protein] and UDP-N-acetyl-alpha-D-glucosamine: step 2/6. Functionally, catalyzes the hydrolysis of UDP-3-O-myristoyl-N-acetylglucosamine to form UDP-3-O-myristoylglucosamine and acetate, the committed step in lipid A biosynthesis. The protein is UDP-3-O-acyl-N-acetylglucosamine deacetylase of Blochmanniella floridana.